We begin with the raw amino-acid sequence, 116 residues long: M-zodatoxin-Lt6a/c (116 aa).

The N-terminal stretch at 1 to 22 is a signal peptide; that stretch reads MKYFVVALTLAVAFVCIEECKT. Propeptides lie at residues 23-44 and 80-83; these read VEIG…DEAR and EEAR. 2 consecutive short sequence motifs (processing quadruplet motif) follow at residues 41-44 and 80-83; these read DEAR and EEAR. Residue Gln84 is modified to Pyrrolidone carboxylic acid.

Belongs to the cationic peptide 03 (latarcin) family. 06 subfamily. Cleavage of the propeptide depends on the processing quadruplet motif (XXXR, with at least one of X being E). As to expression, expressed by the venom gland.

The protein localises to the secreted. Does not have antimicrobial activity against Gram-positive bacteria (A.globiformis VKM Ac-1112 (MIC&gt;70 uM) and B.subtilis VKM B-501 (MIC&gt;70 uM)), Gram-negative bacteria (E.coli DH5-alpha (MIC&gt;70 uM), E.coli MH1 (MIC&gt;70 uM) and P.aeruginosa PAO1 (MIC&gt;70 uM)), yeast (P.pastoris GS115 (MIC&gt;70 uM) or S.cerevisiae Y190 (MIC&gt;70 uM)). Does not have hemolytic activity against rabbit erythrocytes. However, it causes some conductance changes in planar bilayer membranes, without membrane rupture, suggesting a cytolytic function on other biological targets. It causes paralysis, but is not lethal when injected into insect larvae. The protein is M-zodatoxin-Lt6a/c of Lachesana tarabaevi (Spider).